Reading from the N-terminus, the 144-residue chain is Phospholipase A2 (144 aa).

Positions Met-1–Ala-15 are cleaved as a signal peptide. The propeptide at Ala-16 to Thr-22 is activation peptide. 7 cysteine pairs are disulfide-bonded: Cys-33-Cys-99, Cys-49-Cys-144, Cys-51-Cys-67, Cys-66-Cys-127, Cys-73-Cys-120, Cys-83-Cys-113, and Cys-106-Cys-118. Ca(2+) is bound by residues Tyr-50, Gly-52, and Gly-54. His-70 is an active-site residue. Asp-71 is a Ca(2+) binding site. Asp-121 is a catalytic residue.

This sequence belongs to the phospholipase A2 family. In terms of assembly, monomer or homodimer. Requires Ca(2+) as cofactor. Activated by trypsin cleavage in the duodenum. Can also be activated by thrombin or autocatalytically.

The protein localises to the secreted. The enzyme catalyses a 1,2-diacyl-sn-glycero-3-phosphocholine + H2O = a 1-acyl-sn-glycero-3-phosphocholine + a fatty acid + H(+). The catalysed reaction is 1,2-ditetradecanoyl-sn-glycero-3-phosphocholine + H2O = 1-tetradecanoyl-sn-glycero-3-phosphocholine + tetradecanoate + H(+). It catalyses the reaction 1,2-dihexadecanoyl-sn-glycero-3-phosphocholine + H2O = 1-hexadecanoyl-sn-glycero-3-phosphocholine + hexadecanoate + H(+). It carries out the reaction 1-hexadecanoyl-2-(9Z-octadecenoyl)-sn-glycero-3-phosphocholine + H2O = 1-hexadecanoyl-sn-glycero-3-phosphocholine + (9Z)-octadecenoate + H(+). The enzyme catalyses 1-hexadecanoyl-2-(5Z,8Z,11Z,14Z-eicosatetraenoyl)-sn-glycero-3-phosphocholine + H2O = 1-hexadecanoyl-sn-glycero-3-phosphocholine + (5Z,8Z,11Z,14Z)-eicosatetraenoate + H(+). The catalysed reaction is 1-hexadecanoyl-2-(9Z-octadecenoyl)-sn-glycero-3-phospho-(1'-sn-glycerol) + H2O = 1-hexadecanoyl-sn-glycero-3-phospho-(1'-sn-glycerol) + (9Z)-octadecenoate + H(+). It catalyses the reaction N-hexadecanoyl-1,2-di-(9Z-octadecenoyl)-sn-glycero-3-phosphoethanolamine + H2O = N-hexadecanoyl-1-(9Z-octadecenoyl)-sn-glycero-3-phosphoethanolamine + (9Z)-octadecenoate + H(+). It carries out the reaction 1-hexadecanoyl-2-(9Z,12Z-octadecadienoyl)-sn-glycero-3-phosphoethanolamine + H2O = 1-hexadecanoyl-sn-glycero-3-phosphoethanolamine + (9Z,12Z)-octadecadienoate + H(+). The enzyme catalyses N,1-dihexadecanoyl-2-(9Z,12Z-octadecadienoyl)-sn-glycero-3-phosphoethanolamine + H2O = N,1-dihexadecanoyl-sn-glycero-3-phosphoethanolamine + (9Z,12Z)-octadecadienoate + H(+). Functionally, secretory calcium-dependent phospholipase A2 that primarily targets dietary phospholipids in the intestinal tract. Hydrolyzes the ester bond of the fatty acyl group attached at sn-2 position of phospholipids (phospholipase A2 activity) with preference for phosphatidylethanolamines and phosphatidylglycerols over phosphatidylcholines. May play a role in the biosynthesis of N-acyl ethanolamines that regulate energy metabolism and inflammation in the intestinal tract. Hydrolyzes N-acyl phosphatidylethanolamines to N-acyl lysophosphatidylethanolamines, which are further cleaved by a lysophospholipase D to release N-acyl ethanolamines. May act in an autocrine and paracrine manner. Has anti-helminth activity in a process regulated by gut microbiota. Upon helminth infection of intestinal epithelia, directly affects phosphatidylethanolamine contents in the membrane of helminth larvae, likely controlling an array of phospholipid-mediated cellular processes such as membrane fusion and cell division while providing for better immune recognition, ultimately reducing larvae integrity and infectivity. The sequence is that of Phospholipase A2 (PLA2G1B) from Oryctolagus cuniculus (Rabbit).